We begin with the raw amino-acid sequence, 1045 residues long: Pre-mRNA-splicing factor ATP-dependent RNA helicase DHX16 (1045 aa).

Residues 101 to 211 (EDSEESSEEA…ERSDKKAYEE (111 aa)) form a disordered region. Phosphoserine occurs at positions 103, 106, and 107. A compositionally biased stretch (basic residues) spans 119 to 131 (QKKRKKRKHLRKK). Positions 135-144 (EEEEEEEEEV) are enriched in acidic residues. The residue at position 164 (serine 164) is a Phosphoserine. Over residues 170–211 (RTERERLQDLEERDAFAERVRQRDKDRTRNVLERSDKKAYEE) the composition is skewed to basic and acidic residues. The Helicase ATP-binding domain occupies 413–577 (LAAVANHQIL…FDDAPVFRIP (165 aa)). 426–433 (GETGSGKT) serves as a coordination point for ATP. A DEAH box motif is present at residues 524–527 (DEAH). The Helicase C-terminal domain maps to 602 to 775 (SVLQIHVTQP…NVVLLLKSLG (174 aa)). Threonine 716 bears the Phosphothreonine mark. Residues 1026-1045 (EDPHAKKMPKKTGKTREELG) form a disordered region.

This sequence belongs to the DEAD box helicase family. DEAH subfamily. DDX16/PRP8 sub-subfamily. In terms of assembly, component of pre-catalytic spliceosome complexes. Component of the minor spliceosome, which splices U12-type introns. Interacts with GPKOW. Interacts with TRIM6. Interacts with RIGI.

It is found in the nucleus. It localises to the nucleoplasm. The protein localises to the cytoplasm. It carries out the reaction ATP + H2O = ADP + phosphate + H(+). Functionally, required for pre-mRNA splicing as a component of the spliceosome. Contributes to pre-mRNA splicing after spliceosome formation and prior to the first transesterification reaction. As a component of the minor spliceosome, involved in the splicing of U12-type introns in pre-mRNAs. Also plays a role in innate antiviral response by acting as a pattern recognition receptor sensing splicing signals in viral RNA. Mechanistically, TRIM6 promotes the interaction between unanchored 'Lys-48'-polyubiquitin chains and DHX16, leading to DHX16 interaction with RIGI and ssRNA to amplify RIGI-dependent innate antiviral immune responses. The polypeptide is Pre-mRNA-splicing factor ATP-dependent RNA helicase DHX16 (DHX16) (Sus scrofa (Pig)).